The chain runs to 341 residues: Mitochondrial ubiquitin ligase activator of nfkb 1-A (341 aa).

At Met-1 to Pro-5 the chain is on the cytoplasmic side. Residues Val-6 to Tyr-26 form a helical membrane-spanning segment. Residues Arg-27 to Glu-233 are Mitochondrial intermembrane-facing. Residues Val-234–Gly-254 form a helical membrane-spanning segment. The Cytoplasmic portion of the chain corresponds to Arg-255 to Ala-341. The RING-type zinc-finger motif lies at Cys-292–Arg-329.

As to quaternary structure, homooligomer.

It localises to the mitochondrion outer membrane. The catalysed reaction is S-ubiquitinyl-[E2 ubiquitin-conjugating enzyme]-L-cysteine + [acceptor protein]-L-lysine = [E2 ubiquitin-conjugating enzyme]-L-cysteine + N(6)-ubiquitinyl-[acceptor protein]-L-lysine.. The protein operates within protein modification; protein ubiquitination. In terms of biological role, E3 ubiquitin-protein ligase that plays a role in the control of mitochondrial morphology. Promotes mitochondrial fragmentation and influences mitochondrial localization. Inhibits cell growth. E3 ubiquitin ligases accept ubiquitin from an E2 ubiquitin-conjugating enzyme in the form of a thioester and then directly transfer the ubiquitin to targeted substrates. In Danio rerio (Zebrafish), this protein is Mitochondrial ubiquitin ligase activator of nfkb 1-A (mul1a).